A 263-amino-acid polypeptide reads, in one-letter code: Endolytic peptidoglycan transglycosylase RlpA (263 aa).

The N-terminal stretch at 1 to 16 (MNRIYLYLLIVLILAG) is a signal peptide. C17 is lipidated: N-palmitoyl cysteine. The S-diacylglycerol cysteine moiety is linked to residue C17. An SPOR domain is found at 182–257 (KNNALEYVIQ…AGYDSAFIKT (76 aa)).

Belongs to the RlpA family.

It is found in the cell membrane. Its function is as follows. Lytic transglycosylase with a strong preference for naked glycan strands that lack stem peptides. This chain is Endolytic peptidoglycan transglycosylase RlpA, found in Vibrio cholerae serotype O1 (strain ATCC 39315 / El Tor Inaba N16961).